A 150-amino-acid chain; its full sequence is 1,4-dihydroxy-2-naphthoyl-CoA hydrolase (150 aa).

Asp19 is an active-site residue.

The protein belongs to the 4-hydroxybenzoyl-CoA thioesterase family. DHNA-CoA hydrolase subfamily.

The catalysed reaction is 1,4-dihydroxy-2-naphthoyl-CoA + H2O = 1,4-dihydroxy-2-naphthoate + CoA + H(+). Its pathway is cofactor biosynthesis; phylloquinone biosynthesis. The protein operates within quinol/quinone metabolism; 1,4-dihydroxy-2-naphthoate biosynthesis; 1,4-dihydroxy-2-naphthoate from chorismate: step 7/7. In terms of biological role, catalyzes the hydrolysis of 1,4-dihydroxy-2-naphthoyl-CoA (DHNA-CoA) to 1,4-dihydroxy-2-naphthoate (DHNA), a reaction involved in phylloquinone (vitamin K1) biosynthesis. This Prochlorococcus marinus (strain MIT 9312) protein is 1,4-dihydroxy-2-naphthoyl-CoA hydrolase.